We begin with the raw amino-acid sequence, 1281 residues long: Angiotensin-converting enzyme (1281 aa).

The first 17 residues, 1 to 17 (MPAALGLLLPWLSLVGA), serve as a signal peptide directing secretion. At 18–1241 (LQPGLEPPQS…MSVGTKQATA (1224 aa)) the chain is on the extracellular side. Peptidase M2 domains lie at 28–610 (DPTE…LGWP) and 629–1208 (IVDE…LGWP). N-linked (GlcNAc...) asparagine glycosylation is found at Asn-42, Asn-62, Asn-80, Asn-99, and Asn-148. Cys-145 and Cys-151 form a disulfide bridge. Tyr-217 provides a ligand contact to chloride. A glycan (N-linked (GlcNAc...) asparagine) is linked at Asn-304. Cys-345 and Cys-363 are disulfide-bonded. His-376 serves as a coordination point for Zn(2+). Glu-377 serves as the catalytic Proton acceptor 1. Zn(2+) contacts are provided by His-380 and Glu-404. Residue Asn-495 is glycosylated (N-linked (GlcNAc...) asparagine). The active-site Proton donor 1 is the His-506. Arg-515 lines the chloride pocket. A disulfide bond links Cys-531 and Cys-543. 6 N-linked (GlcNAc...) asparagine glycosylation sites follow: Asn-535, Asn-573, Asn-601, Asn-643, Asn-663, and Asn-746. A disulfide bridge links Cys-743 with Cys-749. 2 residues coordinate chloride: Arg-777 and Tyr-815. A disulfide bridge links Cys-943 with Cys-961. Zn(2+) is bound at residue His-974. The Proton acceptor 2 role is filled by Glu-975. Zn(2+) is bound by residues His-978 and Glu-1002. The chloride site is built by Trp-1076 and Arg-1080. Catalysis depends on His-1104, which acts as the Proton donor 2. Arg-1113 serves as a coordination point for chloride. Cys-1129 and Cys-1141 form a disulfide bridge. A glycan (N-linked (GlcNAc...) asparagine) is linked at Asn-1177. A juxtamembrane stalk region spans residues 1201–1240 (NGEVLGWPEYSWTPYAVTEFHAATDTADFLGMSVGTKQAT). Residues 1242-1262 (GAWVLLALALVFLITSIFLGV) form a helical membrane-spanning segment. Residues 1263–1281 (KLFSSRRKAFKSSSEMELK) lie on the Cytoplasmic side of the membrane.

This sequence belongs to the peptidase M2 family. Zn(2+) serves as cofactor. Chloride is required as a cofactor.

The protein localises to the cell membrane. It is found in the cytoplasm. The catalysed reaction is Release of a C-terminal dipeptide, oligopeptide-|-Xaa-Yaa, when Xaa is not Pro, and Yaa is neither Asp nor Glu. Thus, conversion of angiotensin I to angiotensin II, with increase in vasoconstrictor activity, but no action on angiotensin II.. It carries out the reaction angiotensin I + H2O = L-histidyl-L-leucine + angiotensin II. It catalyses the reaction bradykinin + H2O = L-Phe-L-Arg + bradykinin(1-7). The enzyme catalyses substance P + H2O = substance P(1-9) + L-Leu-L-Met-NH2. The catalysed reaction is substance P + H2O = substance P(1-8) + Gly-L-Leu-L-Met-NH2. It carries out the reaction substance P + H2O = L-Phe-L-Phe-Gly-L-Leu-L-Met-NH2 + substance P(1-6). It catalyses the reaction neurotensin + H2O = neurotensin(1-11) + L-isoleucyl-L-leucine. The enzyme catalyses goralatide + H2O = N-acetyl-L-seryl-L-aspartate + L-lysyl-L-proline. The catalysed reaction is Met-enkephalin + H2O = L-phenylalanyl-L-methionine + L-tyrosylglycylglycine. It carries out the reaction Leu-enkephalin + H2O = L-tyrosylglycylglycine + L-phenylalanyl-L-leucine. It catalyses the reaction Met-enkephalin-Arg-Phe + H2O = L-arginyl-L-phenylalanine + Met-enkephalin. Dipeptidyl carboxypeptidase that removes dipeptides from the C-terminus of a variety of circulating hormones, such as angiotensin I, bradykinin or enkephalins, thereby playing a key role in the regulation of blood pressure, electrolyte homeostasis or synaptic plasticity. Composed of two similar catalytic domains, each possessing a functional active site, with different selectivity for substrates. Plays a major role in the angiotensin-renin system that regulates blood pressure and sodium retention by the kidney by converting angiotensin I to angiotensin II, resulting in an increase of the vasoconstrictor activity of angiotensin. Also able to inactivate bradykinin, a potent vasodilator, and therefore enhance the blood pressure response. Acts as a regulator of synaptic transmission by mediating cleavage of neuropeptide hormones, such as substance P, neurotensin or enkephalins. Catalyzes degradation of different enkephalin neuropeptides (Met-enkephalin, Leu-enkephalin, Met-enkephalin-Arg-Phe and possibly Met-enkephalin-Arg-Gly-Leu). Also acts as a regulator of hematopoietic stem cell differentiation by mediating degradation of hemoregulatory peptide N-acetyl-SDKP (AcSDKP). In Gallus gallus (Chicken), this protein is Angiotensin-converting enzyme.